Reading from the N-terminus, the 458-residue chain is Oxysterol-binding protein-related protein 3B (458 aa).

Disordered stretches follow at residues 47 to 66 (VINP…RGRW), 370 to 401 (DMSK…AFTP), and 431 to 458 (RAAA…DLST). A compositionally biased stretch (basic and acidic residues) spans 375–396 (GYEKSSMEERQRAEKRTREEKG). Residues 443-458 (PKSIQFNPWQFQDLST) are compositionally biased toward polar residues.

It belongs to the OSBP family. In terms of tissue distribution, expressed in roots, leaves, stems and flowers.

Functionally, may be involved in the transport of sterols. The chain is Oxysterol-binding protein-related protein 3B (ORP3B) from Arabidopsis thaliana (Mouse-ear cress).